The following is a 295-amino-acid chain: Glutamyl-Q tRNA(Asp) synthetase (295 aa).

L-glutamate contacts are provided by residues 5-9 and Glu41; that span reads RFAPS. The 'HIGH' region signature appears at 8-18; sequence PSPTGLLHIGS. Zn(2+) is bound by residues Cys97, Cys99, Tyr117, and Cys121. The L-glutamate site is built by Tyr178 and Arg196. The 'KMSKS' region motif lies at 234–238; sequence KWSKQ. Lys237 contributes to the ATP binding site.

The protein belongs to the class-I aminoacyl-tRNA synthetase family. GluQ subfamily. Zn(2+) serves as cofactor.

Its function is as follows. Catalyzes the tRNA-independent activation of glutamate in presence of ATP and the subsequent transfer of glutamate onto a tRNA(Asp). Glutamate is transferred on the 2-amino-5-(4,5-dihydroxy-2-cyclopenten-1-yl) moiety of the queuosine in the wobble position of the QUC anticodon. In Neisseria meningitidis serogroup B (strain ATCC BAA-335 / MC58), this protein is Glutamyl-Q tRNA(Asp) synthetase.